We begin with the raw amino-acid sequence, 342 residues long: L-threonine 3-dehydrogenase (342 aa).

Cysteine 38 is a binding site for Zn(2+). Active-site charge relay system residues include threonine 40 and histidine 43. Zn(2+)-binding residues include histidine 63, glutamate 64, cysteine 93, cysteine 96, cysteine 99, and cysteine 107. NAD(+) contacts are provided by residues isoleucine 175, aspartate 195, arginine 200, 262–264 (LGI), and 286–287 (IY).

The protein belongs to the zinc-containing alcohol dehydrogenase family. Homotetramer. Requires Zn(2+) as cofactor.

The protein resides in the cytoplasm. The enzyme catalyses L-threonine + NAD(+) = (2S)-2-amino-3-oxobutanoate + NADH + H(+). It participates in amino-acid degradation; L-threonine degradation via oxydo-reductase pathway; glycine from L-threonine: step 1/2. In terms of biological role, catalyzes the NAD(+)-dependent oxidation of L-threonine to 2-amino-3-ketobutyrate. This chain is L-threonine 3-dehydrogenase, found in Burkholderia lata (strain ATCC 17760 / DSM 23089 / LMG 22485 / NCIMB 9086 / R18194 / 383).